The sequence spans 428 residues: Glutamate--tRNA ligase 2 (428 aa).

The short motif at 6-16 (PSPTGDMRTEQ) is the 'HIGH' region element.

The protein belongs to the class-I aminoacyl-tRNA synthetase family. Glutamate--tRNA ligase type 1 subfamily. In terms of assembly, monomer.

It localises to the cytoplasm. The catalysed reaction is tRNA(Glu) + L-glutamate + ATP = L-glutamyl-tRNA(Glu) + AMP + diphosphate. Its function is as follows. Catalyzes the attachment of glutamate to tRNA(Glu) in a two-step reaction: glutamate is first activated by ATP to form Glu-AMP and then transferred to the acceptor end of tRNA(Glu). The polypeptide is Glutamate--tRNA ligase 2 (Sulfurovum sp. (strain NBC37-1)).